The following is a 118-amino-acid chain: Large ribosomal subunit protein uL24c (118 aa).

The protein belongs to the universal ribosomal protein uL24 family. Part of the 50S ribosomal subunit.

It is found in the plastid. Its subcellular location is the organellar chromatophore. In terms of biological role, one of two assembly initiator proteins, it binds directly to the 5'-end of the 23S rRNA, where it nucleates assembly of the 50S subunit. This chain is Large ribosomal subunit protein uL24c (rpl24), found in Paulinella chromatophora.